A 363-amino-acid polypeptide reads, in one-letter code: Peptide chain release factor 2 (363 aa).

Glutamine 251 is modified (N5-methylglutamine).

The protein belongs to the prokaryotic/mitochondrial release factor family. Post-translationally, methylated by PrmC. Methylation increases the termination efficiency of RF2.

It localises to the cytoplasm. Its function is as follows. Peptide chain release factor 2 directs the termination of translation in response to the peptide chain termination codons UGA and UAA. This chain is Peptide chain release factor 2 (prfB), found in Helicobacter pylori (strain J99 / ATCC 700824) (Campylobacter pylori J99).